The chain runs to 447 residues: Glucose-6-phosphate isomerase (447 aa).

The active-site Proton donor is the glutamate 287. Residues histidine 308 and lysine 422 contribute to the active site.

This sequence belongs to the GPI family.

It is found in the cytoplasm. It catalyses the reaction alpha-D-glucose 6-phosphate = beta-D-fructose 6-phosphate. It functions in the pathway carbohydrate biosynthesis; gluconeogenesis. It participates in carbohydrate degradation; glycolysis; D-glyceraldehyde 3-phosphate and glycerone phosphate from D-glucose: step 2/4. Catalyzes the reversible isomerization of glucose-6-phosphate to fructose-6-phosphate. This chain is Glucose-6-phosphate isomerase, found in Heliobacterium modesticaldum (strain ATCC 51547 / Ice1).